We begin with the raw amino-acid sequence, 670 residues long: DUF724 domain-containing protein 1 (670 aa).

Disordered regions lie at residues 283-315 and 368-445; these read HNGPQQKPVKESPSNAIKQKPMCSSSGARPMTP and ANAE…NNDD. 3 stretches are compositionally biased toward polar residues: residues 294 to 309, 379 to 392, and 426 to 442; these read SPSNAIKQKPMCSSSG, RNQNCLRNDSTQQM, and CNGSESEISNTGKSICN. One can recognise a DUF724 domain in the interval 484–669; sequence PFAKKLPFWK…LEFQTTVSTP (186 aa).

As to expression, expressed in stems and flowers.

Its subcellular location is the nucleus. In terms of biological role, may be involved in the polar growth of plant cells via transportation of RNAs. In Arabidopsis thaliana (Mouse-ear cress), this protein is DUF724 domain-containing protein 1.